The primary structure comprises 276 residues: Syntaxin-12 (276 aa).

S2 bears the N-acetylserine mark. At 2–248 (SYGPLDMYRN…RAAYYQKKSR (247 aa)) the chain is on the cytoplasmic side. A coiled-coil region spans residues 33 to 131 (IQRISQATAQ…RRVSEKEKES (99 aa)). S139, S142, S218, and S225 each carry phosphoserine. The t-SNARE coiled-coil homology domain maps to 178-240 (LELIKERETA…ERATEQLQRA (63 aa)). Residues 249–269 (KKMCILVLVLSVIILILGLII) traverse the membrane as a helical; Anchor for type IV membrane protein segment. At 270–276 (WLVYKTK) the chain is on the vesicular side.

The protein belongs to the syntaxin family. As to quaternary structure, interacts with NAPA and SNAP23. Identified in a complex containing STX6, STX12, VAMP4 and VTI1A. Associates with the BLOC-1 complex. Interacts with BLOC1S6. Interacts with GRIPAP1. Forms a complex with GRIP1, GRIA2 and NSG1; controls the intracellular fate of AMPAR and the endosomal sorting of the GRIA2 subunit toward recycling and membrane targeting. Interacts with NSG1. Interacts with TPC1. Interacts (via N-terminus) with VPS13B.

It localises to the endosome membrane. The protein resides in the golgi apparatus membrane. Its subcellular location is the endomembrane system. The protein localises to the early endosome membrane. It is found in the recycling endosome membrane. In terms of biological role, SNARE promoting fusion of transport vesicles with target membranes. Together with SNARE STX6, promotes movement of vesicles from endosomes to the cell membrane, and may therefore function in the endocytic recycling pathway. Through complex formation with GRIP1, GRIA2 and NSG1 controls the intracellular fate of AMPAR and the endosomal sorting of the GRIA2 subunit toward recycling and membrane targeting. The chain is Syntaxin-12 (STX12) from Homo sapiens (Human).